The chain runs to 178 residues: Deoxycytidylate deaminase (178 aa).

One can recognise a CMP/dCMP-type deaminase domain in the interval 14-146; the sequence is EWPEYFMAVA…EATAARLLFD (133 aa). Histidine 84 is a Zn(2+) binding site. Glutamate 86 serves as the catalytic Proton donor. Residues cysteine 110 and cysteine 113 each coordinate Zn(2+). At serine 174 the chain carries Phosphoserine.

The protein belongs to the cytidine and deoxycytidylate deaminase family. Homohexamer. Zn(2+) serves as cofactor.

The catalysed reaction is dCMP + H2O + H(+) = dUMP + NH4(+). It catalyses the reaction 5-hydroxymethyl-dCMP + H2O + H(+) = 5-hydroxymethyl-dUMP + NH4(+). With respect to regulation, allosteric enzyme whose activity is greatly influenced by the end products of its metabolic pathway, dCTP and dTTP. Functionally, catalyzes the deamination of dCMP to dUMP, providing the nucleoside monophosphate substrate for the thymidylate synthase/TYMS. Also, part of a nucleotide salvage pathway that eliminates epigenetically modified 5-hydroxymethyl-dCMP (hmdCMP) in a two-step process entailing deamination to cytotoxic 5-hydroxymethyl-dUMP (hmdUMP), followed by its hydrolysis into 5-hydroxymethyluracil (hmU) and 2-deoxy-D-ribose 5-phosphate (deoxyribosephosphate). Catalyzes the first step in that pathway, the deamination of 5-hydroxymethyl-dCMP (hmdCMP). This chain is Deoxycytidylate deaminase, found in Pongo abelii (Sumatran orangutan).